A 326-amino-acid polypeptide reads, in one-letter code: Biotin synthase (326 aa).

A Radical SAM core domain is found at 40–264 (GQVQACTLVS…VLPRSYVRLA (225 aa)). Residues Cys-55, Cys-59, and Cys-62 each contribute to the [4Fe-4S] cluster site. Positions 99, 130, 190, and 262 each coordinate [2Fe-2S] cluster.

It belongs to the radical SAM superfamily. Biotin synthase family. As to quaternary structure, homodimer. [4Fe-4S] cluster serves as cofactor. Requires [2Fe-2S] cluster as cofactor.

The catalysed reaction is (4R,5S)-dethiobiotin + (sulfur carrier)-SH + 2 reduced [2Fe-2S]-[ferredoxin] + 2 S-adenosyl-L-methionine = (sulfur carrier)-H + biotin + 2 5'-deoxyadenosine + 2 L-methionine + 2 oxidized [2Fe-2S]-[ferredoxin]. It participates in cofactor biosynthesis; biotin biosynthesis; biotin from 7,8-diaminononanoate: step 2/2. In terms of biological role, catalyzes the conversion of dethiobiotin (DTB) to biotin by the insertion of a sulfur atom into dethiobiotin via a radical-based mechanism. In Halorhodospira halophila (strain DSM 244 / SL1) (Ectothiorhodospira halophila (strain DSM 244 / SL1)), this protein is Biotin synthase.